A 306-amino-acid chain; its full sequence is Embryogenic cell protein 40 (306 aa).

Disordered stretches follow at residues Met-1 to Gly-57, Ala-80 to Gly-171, and Gly-188 to His-306. Residues Ile-12 to Gln-23 are compositionally biased toward polar residues. Over residues Val-32–Thr-44 the composition is skewed to low complexity. Composition is skewed to gly residues over residues Gly-85–Thr-119, Gly-127–Val-151, and Gly-159–Gly-171. Positions Gly-194 to Ser-204 are enriched in low complexity. Basic and acidic residues-rich tracts occupy residues His-205–His-218 and Lys-243–Thr-259. Low complexity predominate over residues Thr-260–Ala-278. Residues Val-279 to Pro-298 show a composition bias toward basic and acidic residues.

The protein belongs to the plant dehydrin family.

This chain is Embryogenic cell protein 40 (ECP40), found in Daucus carota (Wild carrot).